The primary structure comprises 409 residues: Na(+)-translocating NADH-quinone reductase subunit F (409 aa).

A helical transmembrane segment spans residues 5 to 25 (FIFGIGAFTAIVLVLAVVILI). Positions 34–128 (GDITISINND…SMDVELPEEV (95 aa)) constitute a 2Fe-2S ferredoxin-type domain. Cys71, Cys77, Cys80, and Cys112 together coordinate [2Fe-2S] cluster. In terms of domain architecture, FAD-binding FR-type spans 131–271 (VKKWECTVIS…SGPFGEFFAK (141 aa)).

This sequence belongs to the NqrF family. As to quaternary structure, composed of six subunits; NqrA, NqrB, NqrC, NqrD, NqrE and NqrF. Requires [2Fe-2S] cluster as cofactor. It depends on FAD as a cofactor.

It is found in the cell inner membrane. It catalyses the reaction a ubiquinone + n Na(+)(in) + NADH + H(+) = a ubiquinol + n Na(+)(out) + NAD(+). Its function is as follows. NQR complex catalyzes the reduction of ubiquinone-1 to ubiquinol by two successive reactions, coupled with the transport of Na(+) ions from the cytoplasm to the periplasm. The first step is catalyzed by NqrF, which accepts electrons from NADH and reduces ubiquinone-1 to ubisemiquinone by a one-electron transfer pathway. The chain is Na(+)-translocating NADH-quinone reductase subunit F from Mannheimia succiniciproducens (strain KCTC 0769BP / MBEL55E).